Here is a 98-residue protein sequence, read N- to C-terminus: Small ribosomal subunit protein bS20 (98 aa).

Belongs to the bacterial ribosomal protein bS20 family.

Its function is as follows. Binds directly to 16S ribosomal RNA. This is Small ribosomal subunit protein bS20 from Kosmotoga olearia (strain ATCC BAA-1733 / DSM 21960 / TBF 19.5.1).